We begin with the raw amino-acid sequence, 284 residues long: 4-hydroxybenzoate octaprenyltransferase (284 aa).

9 consecutive transmembrane segments (helical) span residues 19–39 (IPILLILWPTLTALVLASHGL), 42–62 (ISYLVIFTIGVVVMRTVGCII), 85–105 (GQLSIKNAIWLCISLTLVAFI), 107–127 (VLFLNLYTILLSFVALFLAIL), 134–154 (FFAIPQLILGLAFNFGIFMAF), 165–185 (AWIFYLATICWTIAYDTIYAL), 211–231 (ILLFNFLSLLLLIILGIYCDF), 233–253 (SFFYLGVVICSLFFVRNYFLY), and 261–281 (CINAFSANHWIGLIIFIMAVI).

It belongs to the UbiA prenyltransferase family. The cofactor is Mg(2+).

It localises to the cell inner membrane. It catalyses the reaction all-trans-octaprenyl diphosphate + 4-hydroxybenzoate = 4-hydroxy-3-(all-trans-octaprenyl)benzoate + diphosphate. Its pathway is cofactor biosynthesis; ubiquinone biosynthesis. Its function is as follows. Catalyzes the prenylation of para-hydroxybenzoate (PHB) with an all-trans polyprenyl group. Mediates the second step in the final reaction sequence of ubiquinone-8 (UQ-8) biosynthesis, which is the condensation of the polyisoprenoid side chain with PHB, generating the first membrane-bound Q intermediate 3-octaprenyl-4-hydroxybenzoate. In Francisella tularensis subsp. novicida (strain U112), this protein is 4-hydroxybenzoate octaprenyltransferase.